Here is a 490-residue protein sequence, read N- to C-terminus: Probable cytosol aminopeptidase (490 aa).

Mn(2+)-binding residues include Lys257 and Asp262. Lys269 is an active-site residue. Asp281, Asp341, and Glu343 together coordinate Mn(2+). The active site involves Arg345.

It belongs to the peptidase M17 family. Mn(2+) serves as cofactor.

It localises to the cytoplasm. The catalysed reaction is Release of an N-terminal amino acid, Xaa-|-Yaa-, in which Xaa is preferably Leu, but may be other amino acids including Pro although not Arg or Lys, and Yaa may be Pro. Amino acid amides and methyl esters are also readily hydrolyzed, but rates on arylamides are exceedingly low.. It catalyses the reaction Release of an N-terminal amino acid, preferentially leucine, but not glutamic or aspartic acids.. Functionally, presumably involved in the processing and regular turnover of intracellular proteins. Catalyzes the removal of unsubstituted N-terminal amino acids from various peptides. The sequence is that of Probable cytosol aminopeptidase from Prochlorococcus marinus (strain MIT 9215).